The chain runs to 286 residues: Aspartate-semialdehyde dehydrogenase (286 aa).

NADP(+) contacts are provided by residues 10 to 13 (RGMV), 37 to 38 (TS), and Q74. R103 is a phosphate binding site. C136 serves as the catalytic Acyl-thioester intermediate. Substrate is bound at residue Q163. Residues 166–167 (SG) and P194 each bind NADP(+). E242 is a binding site for substrate. K245 is a binding site for phosphate. Position 269 (R269) interacts with substrate. The Proton acceptor role is filled by H276.

It belongs to the aspartate-semialdehyde dehydrogenase family. As to quaternary structure, homodimer.

It carries out the reaction L-aspartate 4-semialdehyde + phosphate + NADP(+) = 4-phospho-L-aspartate + NADPH + H(+). It functions in the pathway amino-acid biosynthesis; L-lysine biosynthesis via DAP pathway; (S)-tetrahydrodipicolinate from L-aspartate: step 2/4. The protein operates within amino-acid biosynthesis; L-methionine biosynthesis via de novo pathway; L-homoserine from L-aspartate: step 2/3. Its pathway is amino-acid biosynthesis; L-threonine biosynthesis; L-threonine from L-aspartate: step 2/5. Catalyzes the NADPH-dependent formation of L-aspartate-semialdehyde (L-ASA) by the reductive dephosphorylation of L-aspartyl-4-phosphate. This Actinobacillus pleuropneumoniae (Haemophilus pleuropneumoniae) protein is Aspartate-semialdehyde dehydrogenase (asd).